The chain runs to 156 residues: Transcription antitermination protein NusB (156 aa).

This sequence belongs to the NusB family.

In terms of biological role, involved in transcription antitermination. Required for transcription of ribosomal RNA (rRNA) genes. Binds specifically to the boxA antiterminator sequence of the ribosomal RNA (rrn) operons. In Vibrio cholerae serotype O1 (strain ATCC 39541 / Classical Ogawa 395 / O395), this protein is Transcription antitermination protein NusB.